The primary structure comprises 216 residues: Cytidylate kinase (216 aa).

Residue 11–19 (GPAGAGKGT) coordinates ATP.

It belongs to the cytidylate kinase family. Type 1 subfamily.

The protein resides in the cytoplasm. It catalyses the reaction CMP + ATP = CDP + ADP. The catalysed reaction is dCMP + ATP = dCDP + ADP. In Mesorhizobium japonicum (strain LMG 29417 / CECT 9101 / MAFF 303099) (Mesorhizobium loti (strain MAFF 303099)), this protein is Cytidylate kinase.